The primary structure comprises 356 residues: MSGQSSWRRAATVMLAAGWTHSSPAGFRLLLLQRAQNQRFLPGAHVFPGGVLDAADSSPDWVRLFAPRHTPPRFGLGPEPPRQPPFPGLSHGDADPAALPDDVALRICAIRETFEEAGVLLLRPRDAPASQEPSQALSPPAGLAEWRSRVRSDPRCFLQLCAHLDCTPDIWALHDWGGWLTPYGRSLRRFDTTFLLCCLRDTPRVEPDLAEVVGYQWLSPSEATECFLSKEIWLAPPQFYEMRRLENFASLSALYRFCSDRPLEVAQKWLPIILVTSDGSVHLLPGDELYVKDSDFLEKNMSTDKKTEEIMKEGKVLNRIVIRSPYVYEIYVTLPSENKHVFPRNYIVNKSRTARL.

The Nudix hydrolase domain maps to 10–241; it reads AATVMLAAGW…IWLAPPQFYE (232 aa). Residues 72–94 form a disordered region; sequence PRFGLGPEPPRQPPFPGLSHGDA. Residues 78–87 are compositionally biased toward pro residues; it reads PEPPRQPPFP. The Nudix box signature appears at 97–118; that stretch reads AALPDDVALRICAIRETFEEAG. Mg(2+) is bound by residues Glu-112 and Glu-116. Lys-299 is subject to N6-succinyllysine. The short motif at 354-356 is the Microbody targeting signal element; sequence ARL.

Belongs to the Nudix hydrolase family. Monomer. Mg(2+) serves as cofactor. Mn(2+) is required as a cofactor.

The protein localises to the peroxisome. It carries out the reaction an acyl-CoA + H2O = an acyl-4'-phosphopantetheine + adenosine 3',5'-bisphosphate + 2 H(+). It catalyses the reaction CoA + H2O = (R)-4'-phosphopantetheine + adenosine 3',5'-bisphosphate + 2 H(+). The enzyme catalyses hexanoyl-CoA + H2O = hexanoyl-4'-phosphopantetheine + adenosine 3',5'-bisphosphate + 2 H(+). The catalysed reaction is octanoyl-CoA + H2O = S-octanoyl-4'-phosphopantetheine + adenosine 3',5'-bisphosphate + 2 H(+). It carries out the reaction butanoyl-CoA + H2O = S-butanoyl-4'-phosphopantetheine + adenosine 3',5'-bisphosphate + 2 H(+). It catalyses the reaction propanoyl-CoA + H2O = propanoyl-4'-phosphopantetheine + adenosine 3',5'-bisphosphate + 2 H(+). The enzyme catalyses malonyl-CoA + H2O = malonyl-4'-phosphopantetheine + adenosine 3',5'-bisphosphate + 2 H(+). The catalysed reaction is succinyl-CoA + H2O = succinyl-4'-phosphopantetheine + adenosine 3',5'-bisphosphate + 2 H(+). It carries out the reaction choloyl-CoA + H2O = S-choloyl-4'-phosphopantetheine + adenosine 3',5'-bisphosphate + 2 H(+). It catalyses the reaction 4,8-dimethylnonanoyl-CoA + H2O = S-(4,8-dimethylnonanoyl)-4'-phosphopantetheine + adenosine 3',5'-bisphosphate + 2 H(+). The enzyme catalyses (9Z,12Z,15Z)-octadecatrienoyl-CoA + H2O = S-(9Z,12Z,15Z-octadecatrienoyl)-4'-phosphopantetheine + adenosine 3',5'-bisphosphate + 2 H(+). The catalysed reaction is (9Z,12Z)-octadecadienoyl-CoA + H2O = S-(9Z,12Z-octadecadienoyl)-4'-phosphopantetheine + adenosine 3',5'-bisphosphate + 2 H(+). It carries out the reaction (9Z)-hexadecenoyl-CoA + H2O = S-(9Z-hexadecenoyl)-4'-phosphopantetheine + adenosine 3',5'-bisphosphate + 2 H(+). It catalyses the reaction (9Z)-tetradecenoyl-CoA + H2O = S-(9Z-tetradecenoyl)-4'-phosphopantetheine + adenosine 3',5'-bisphosphate + 2 H(+). The enzyme catalyses (6Z)-octenoyl-CoA + H2O = S-(6Z-octenoyl)-4'-phosphopantetheine + adenosine 3',5'-bisphosphate + 2 H(+). The catalysed reaction is hexadecanoyl-CoA + H2O = S-hexadecanoyl-4'-phosphopantetheine + adenosine 3',5'-bisphosphate + 2 H(+). It carries out the reaction tetradecanoyl-CoA + H2O = tetradecanoyl-4'-phosphopantetheine + adenosine 3',5'-bisphosphate + 2 H(+). It catalyses the reaction dodecanoyl-CoA + H2O = S-dodecanoyl-4'-phosphopantetheine + adenosine 3',5'-bisphosphate + 2 H(+). The enzyme catalyses a 5'-end CoA-ribonucleoside in mRNA + H2O = a 5'-end phospho-adenosine-phospho-ribonucleoside in mRNA + (R)-4'-phosphopantetheine + 2 H(+). Its function is as follows. Fatty acyl-coenzyme A (CoA) diphosphatase that hydrolyzes fatty acyl-CoA to yield acyl-4'-phosphopantetheine and adenosine 3',5'-bisphosphate. Mediates the hydrolysis of a wide range of CoA esters, including choloyl-CoA and branched-chain fatty-acyl-CoA esters and at low substrate concentrations medium and long-chain fatty-acyl-CoA esters are the primary substrates. Highest activity seen with medium-chain acyl-CoA esters and higher rates of activity seen with the unsaturated acyl-CoA esters compared with the saturated esters. Exhibits decapping activity towards dpCoA-capped RNAs in vitro. The polypeptide is Acyl-coenzyme A diphosphatase NUDT19 (Nudt19) (Mus saxicola (Brown spiny mouse)).